Consider the following 1158-residue polypeptide: ATP-dependent helicase/deoxyribonuclease subunit B (1158 aa).

8 to 15 (GRAGTGKS) is a binding site for ATP. The [4Fe-4S] cluster site is built by cysteine 791, cysteine 1112, cysteine 1115, and cysteine 1121.

The protein belongs to the helicase family. AddB/RexB type 1 subfamily. In terms of assembly, heterodimer of AddA and AddB. Requires Mg(2+) as cofactor. [4Fe-4S] cluster is required as a cofactor.

The heterodimer acts as both an ATP-dependent DNA helicase and an ATP-dependent, dual-direction single-stranded exonuclease. Recognizes the chi site generating a DNA molecule suitable for the initiation of homologous recombination. The AddB subunit has 5' -&gt; 3' nuclease activity but not helicase activity. The sequence is that of ATP-dependent helicase/deoxyribonuclease subunit B from Clostridium perfringens (strain 13 / Type A).